A 346-amino-acid chain; its full sequence is Protein RecA (346 aa).

65 to 72 (GPESSGKT) contacts ATP.

It belongs to the RecA family.

It is found in the cytoplasm. Functionally, can catalyze the hydrolysis of ATP in the presence of single-stranded DNA, the ATP-dependent uptake of single-stranded DNA by duplex DNA, and the ATP-dependent hybridization of homologous single-stranded DNAs. It interacts with LexA causing its activation and leading to its autocatalytic cleavage. This Enterococcus mundtii protein is Protein RecA.